The sequence spans 350 residues: Geranylgeranyl diphosphate synthase (350 aa).

Isopentenyl diphosphate-binding residues include K70, R73, and H102. Positions 109 and 113 each coordinate Mg(2+). The DDXXD motif signature appears at 109 to 113; that stretch reads DDVMD. R119 is an isopentenyl diphosphate binding site. The DDXXD motif signature appears at 240 to 244; that stretch reads DDLIG.

This sequence belongs to the FPP/GGPP synthase family. Mg(2+) serves as cofactor.

It carries out the reaction isopentenyl diphosphate + (2E,6E)-farnesyl diphosphate = (2E,6E,10E)-geranylgeranyl diphosphate + diphosphate. Its pathway is isoprenoid biosynthesis; geranylgeranyl diphosphate biosynthesis; geranylgeranyl diphosphate from farnesyl diphosphate and isopentenyl diphosphate: step 1/1. Catalyzes the condensation of isopentenyl pyrophosphate (IPP) with (2E,6E)-farnesyl diphosphate (E,E-FPP) to yield geranylgeranyl diphosphate (GGPP). This chain is Geranylgeranyl diphosphate synthase, found in Mycobacterium tuberculosis (strain ATCC 25618 / H37Rv).